We begin with the raw amino-acid sequence, 183 residues long: Large ribosomal subunit protein uL5 (183 aa).

It belongs to the universal ribosomal protein uL5 family. As to quaternary structure, part of the 50S ribosomal subunit; part of the 5S rRNA/L5/L18/L25 subcomplex. Contacts the 5S rRNA and the P site tRNA. Forms a bridge to the 30S subunit in the 70S ribosome.

Its function is as follows. This is one of the proteins that bind and probably mediate the attachment of the 5S RNA into the large ribosomal subunit, where it forms part of the central protuberance. In the 70S ribosome it contacts protein S13 of the 30S subunit (bridge B1b), connecting the 2 subunits; this bridge is implicated in subunit movement. Contacts the P site tRNA; the 5S rRNA and some of its associated proteins might help stabilize positioning of ribosome-bound tRNAs. The protein is Large ribosomal subunit protein uL5 of Fusobacterium nucleatum subsp. nucleatum (strain ATCC 25586 / DSM 15643 / BCRC 10681 / CIP 101130 / JCM 8532 / KCTC 2640 / LMG 13131 / VPI 4355).